Reading from the N-terminus, the 495-residue chain is Phenylalanine--tRNA ligase alpha subunit (495 aa).

Residues threonine 338, 377–379 (QLE), and tyrosine 417 each bind L-phenylalanine. Glutamate 419 is a binding site for Mg(2+). Phenylalanine 442 contacts L-phenylalanine.

Belongs to the class-II aminoacyl-tRNA synthetase family. Phe-tRNA synthetase alpha subunit type 2 subfamily. As to quaternary structure, tetramer of two alpha and two beta subunits. The cofactor is Mg(2+).

Its subcellular location is the cytoplasm. The catalysed reaction is tRNA(Phe) + L-phenylalanine + ATP = L-phenylalanyl-tRNA(Phe) + AMP + diphosphate + H(+). The protein is Phenylalanine--tRNA ligase alpha subunit of Methanosarcina mazei (strain ATCC BAA-159 / DSM 3647 / Goe1 / Go1 / JCM 11833 / OCM 88) (Methanosarcina frisia).